The sequence spans 256 residues: F-actin-capping protein subunit beta (256 aa).

Residue methionine 1 is modified to N-acetylmethionine.

This sequence belongs to the F-actin-capping protein beta subunit family. As to quaternary structure, component of the F-actin capping complex, composed of a heterodimer of an alpha and a beta subunit.

It is found in the cytoplasm. It localises to the cytoskeleton. Its function is as follows. F-actin-capping proteins bind in a Ca(2+)-independent manner to the fast growing ends of actin filaments (barbed end) thereby blocking the exchange of subunits at these ends. Unlike other capping proteins (such as gelsolin and severin), these proteins do not sever actin filaments. The polypeptide is F-actin-capping protein subunit beta (Arabidopsis thaliana (Mouse-ear cress)).